The primary structure comprises 261 residues: Carbonic anhydrase 1 (261 aa).

An N-acetylalanine modification is found at Ala-2. The Alpha-carbonic anhydrase domain occupies Pro-4–Phe-261. His-65 functions as the Proton donor/acceptor in the catalytic mechanism. Zn(2+)-binding residues include His-95, His-97, and His-120. Substrate is bound by residues Thr-200 and Thr-200–His-201.

Belongs to the alpha-carbonic anhydrase family. Zn(2+) is required as a cofactor.

The protein resides in the cytoplasm. The catalysed reaction is hydrogencarbonate + H(+) = CO2 + H2O. It catalyses the reaction urea = cyanamide + H2O. Its activity is regulated as follows. Inhibited by acetazolamide. Functionally, catalyzes the reversible hydration of carbon dioxide. Can hydrate cyanamide to urea. The protein is Carbonic anhydrase 1 (CA1) of Bos taurus (Bovine).